Reading from the N-terminus, the 474-residue chain is MKIENRRKGSCTTVLVGRKASIDGSTMIARNDDGHEALDPQRFIVIQPEEQPRHYKAVLSDLELDLPENPLRYTSTPNAVLKEGIWPAAGINSANVAMSATETITTNPRILGLDPYVENGMGEEDLVTLVLPYIKSAREGVERLGQLLKTYGTYEPNGIAFADKEEVWWLETIGGHHWAAVRIPDDSYVVAPNRMNIDEFKFDNDDYMCSSDLKQLIDANHLNPDFEGYESHYNLRHIFGSSSIKDSVYNNPRTWYGQNFLGNPSEDPQNQELPFICEASRKITVEDVKFVLSSHFENTKYDPYGSTNSPEERKLFRPIGINRNHSVHILQVRNNVPDELAGVQWLAFGANTFNHVVPFYTAINDTPASYRDAKGEYDPTNMYWLSATTAVLGDSNYDLFVDLRNTFELNTMAKFHEIQNETDKNFETAEDKIAYLTQANEKLAEAAFKAQTELLGRMVVLGSANMKLRFDFND.

Cys-11 is a catalytic residue.

This sequence belongs to the peptidase C69 family.

The catalysed reaction is an L-aminoacyl-L-amino acid + H2O = 2 an L-alpha-amino acid. The polypeptide is Probable dipeptidase B (pepDB) (Lactococcus lactis subsp. lactis (strain IL1403) (Streptococcus lactis)).